The sequence spans 903 residues: Protein translocase subunit SecA (903 aa).

Residues Gln87, 105-109 (GEGKT), and Asp512 contribute to the ATP site. Positions 853–903 (KQQQLSHYEENALVTEDPNAPATAERKVGRNDPCPCGSGKKYKQCHGRLQS) are disordered. Positions 886, 888, 897, and 898 each coordinate Zn(2+). The span at 892 to 903 (KKYKQCHGRLQS) shows a compositional bias: basic residues.

It belongs to the SecA family. Monomer and homodimer. Part of the essential Sec protein translocation apparatus which comprises SecA, SecYEG and auxiliary proteins SecDF-YajC and YidC. Zn(2+) is required as a cofactor.

The protein resides in the cell inner membrane. Its subcellular location is the cytoplasm. It catalyses the reaction ATP + H2O + cellular proteinSide 1 = ADP + phosphate + cellular proteinSide 2.. Its function is as follows. Part of the Sec protein translocase complex. Interacts with the SecYEG preprotein conducting channel. Has a central role in coupling the hydrolysis of ATP to the transfer of proteins into and across the cell membrane, serving both as a receptor for the preprotein-SecB complex and as an ATP-driven molecular motor driving the stepwise translocation of polypeptide chains across the membrane. This is Protein translocase subunit SecA from Serratia proteamaculans (strain 568).